The following is a 72-amino-acid chain: Dermaseptin-A4 (72 aa).

A signal peptide spans 1–22 (MAFLKKSLFLVLFLGMVSLSIC). The propeptide occupies 23 to 41 (EEEKREEENEQEDDEQSEE). Positions 24–43 (EEKREEENEQEDDEQSEEKR) are disordered. Acidic residues predominate over residues 30 to 39 (ENEQEDDEQS). An Alanine amide modification is found at A69. Residues 71-72 (EQ) constitute a propeptide that is removed on maturation.

This sequence belongs to the frog skin active peptide (FSAP) family. Dermaseptin subfamily. Expressed by the skin glands.

The protein resides in the secreted. Possesses a potent antimicrobial activity against Gram-positive and Gram-negative bacteria. Probably acts by disturbing membrane functions with its amphipathic structure. This chain is Dermaseptin-A4, found in Agalychnis annae (Blue-sided leaf frog).